The sequence spans 285 residues: Cytochrome c1 (285 aa).

An N-terminal signal peptide occupies residues 1–22 (MIRKLTLTAATALALSGGAAMA). Heme c is bound by residues Cys-58, Cys-61, His-62, and Met-207. A helical transmembrane segment spans residues 251-269 (AGFTAVMFLTVLSVLLYLT).

The main subunits of complex b-c1 are: cytochrome b, cytochrome c1 and the Rieske protein. Post-translationally, binds 1 heme c group covalently per subunit.

Its subcellular location is the cell membrane. Component of the ubiquinol-cytochrome c reductase complex (complex III or cytochrome b-c1 complex), which is a respiratory chain that generates an electrochemical potential coupled to ATP synthesis. c1 functions as an electron donor to cytochrome c. The sequence is that of Cytochrome c1 (petC) from Cereibacter sphaeroides (Rhodobacter sphaeroides).